The following is a 335-amino-acid chain: Replication factor C subunit 4 (335 aa).

56 to 63 serves as a coordination point for ATP; the sequence is SGPPGTGK.

This sequence belongs to the activator 1 small subunits family. Heterotetramer of subunits RFC2, RFC3, RFC4 and RFC5 that can form a complex with RFC1. Expressed in roots, leaves, shoot apical meristem (SAM), flag leaves and panicles.

The protein resides in the nucleus. Its function is as follows. May be involved in DNA replication and thus regulate cell proliferation. This Oryza sativa subsp. japonica (Rice) protein is Replication factor C subunit 4 (RFC4).